Reading from the N-terminus, the 162-residue chain is MEGRAWKFGDDVDTDAVIPGRYLIFNTPGELAKYTFEGVRPDFAKKVHENDIVVAGSNFGCGSSREHAPLALKGSKVSCVIAKSFARIFFRNAINIGVPVLECPNTDRIDDGDELEVDLSTGDIQNITKGETYQATPLPDFVREIVDEGGLIEYARKLVSER.

Belongs to the LeuD family. LeuD type 2 subfamily. As to quaternary structure, heterodimer of LeuC and LeuD.

The enzyme catalyses (2R,3S)-3-isopropylmalate = (2S)-2-isopropylmalate. The protein operates within amino-acid biosynthesis; L-leucine biosynthesis; L-leucine from 3-methyl-2-oxobutanoate: step 2/4. Functionally, catalyzes the isomerization between 2-isopropylmalate and 3-isopropylmalate, via the formation of 2-isopropylmaleate. This Methanosarcina acetivorans (strain ATCC 35395 / DSM 2834 / JCM 12185 / C2A) protein is 3-isopropylmalate dehydratase small subunit (leuD).